The primary structure comprises 636 residues: Chaperone protein HtpG (636 aa).

The interval 1 to 344 (MTLEADKQTH…SADLSLNVSR (344 aa)) is a; substrate-binding. The tract at residues 345–561 (EILQSGPVVD…EGDLGLQMRQ (217 aa)) is b. Residues 562–636 (LLEASGQKVP…LNKLLLELSA (75 aa)) form a c region.

This sequence belongs to the heat shock protein 90 family. As to quaternary structure, homodimer.

The protein resides in the cytoplasm. In terms of biological role, molecular chaperone. Has ATPase activity. The sequence is that of Chaperone protein HtpG from Xylella fastidiosa (strain Temecula1 / ATCC 700964).